Here is a 403-residue protein sequence, read N- to C-terminus: Glucosyl-3-phosphoglycerate synthase (403 aa).

Aspartate 150 is an a divalent metal cation binding site. (2R)-3-phosphoglycerate is bound at residue 189–192 (GRVT). Residue histidine 273 participates in a divalent metal cation binding.

This sequence belongs to the glycosyltransferase 2 family. In terms of assembly, homodimer. The cofactor is Mn(2+). Requires Co(2+) as cofactor. It depends on Mg(2+) as a cofactor. Ni(2+) is required as a cofactor.

The enzyme catalyses an NDP-alpha-D-glucose + (2R)-3-phosphoglycerate = (2R)-2-O-(alpha-D-glucopyranosyl)-3-phospho-glycerate + a ribonucleoside 5'-diphosphate + H(+). Involved in the biosynthesis of 6-O-methylglucose lipopolysaccarides (MGLPs). Catalyzes the transfer of a glucose (Glc) moiety from uridine diphosphate (UDP-Glc) to the position 2 of 3-phospho-D-glycerate (3-PGA) to form glucosyl-3-phosphoglycerate (GPG). GpgS is most active with UDP-glucose, followed by GDP-glucose, ADP-glucose, and to a lesser extent, TDP-glucose. 3-PGA is the only acceptor for these glucosyl donors. This is Glucosyl-3-phosphoglycerate synthase from Persephonella marina (strain DSM 14350 / EX-H1).